A 579-amino-acid polypeptide reads, in one-letter code: Threonylcarbamoyladenosine tRNA methylthiotransferase (579 aa).

The residue at position 53 (Ser-53) is a Phosphoserine. Residues 64–172 (QKIWIRTWGC…VVEVVEETIK (109 aa)) enclose the MTTase N-terminal domain. Positions 73 and 109 each coordinate [4Fe-4S] cluster. Position 122 is a phosphoserine (Ser-122). The [4Fe-4S] cluster site is built by Cys-138, Cys-214, Cys-218, and Cys-221. Positions 200–431 (RKNPLIEIIS…RVFHSYSPYD (232 aa)) constitute a Radical SAM core domain. The region spanning 431 to 493 (DHKIGERQQV…KHFMKGQPVS (63 aa)) is the TRAM domain. Position 499 is a phosphothreonine (Thr-499). A helical membrane pass occupies residues 556–578 (CALRMSVGLALLGLLFAFFVKVY).

This sequence belongs to the methylthiotransferase family. CDKAL1 subfamily. It depends on [4Fe-4S] cluster as a cofactor. In terms of tissue distribution, expressed in pancreatic islets.

Its subcellular location is the endoplasmic reticulum membrane. It catalyses the reaction N(6)-L-threonylcarbamoyladenosine(37) in tRNA + (sulfur carrier)-SH + AH2 + 2 S-adenosyl-L-methionine = 2-methylsulfanyl-N(6)-L-threonylcarbamoyladenosine(37) in tRNA + (sulfur carrier)-H + 5'-deoxyadenosine + L-methionine + A + S-adenosyl-L-homocysteine + 2 H(+). Catalyzes the methylthiolation of N6-threonylcarbamoyladenosine (t(6)A), leading to the formation of 2-methylthio-N6-threonylcarbamoyladenosine (ms(2)t(6)A) at position 37 in tRNAs that read codons beginning with adenine. This is Threonylcarbamoyladenosine tRNA methylthiotransferase (CDKAL1) from Homo sapiens (Human).